The primary structure comprises 1220 residues: Protein patched homolog 1 (1220 aa).

The disordered stretch occupies residues 1–27; it reads MASDPRDPGPAGGVFGDLPPSYTRSPP. Topologically, residues 1–84 are cytoplasmic; it reads MASDPRDPGP…GCHIQRHCGK (84 aa). Residues 85–105 traverse the membrane as a helical segment; it reads VLFIGLLVFGALSVGLRVAAI. Residues 106-419 are Extracellular-facing; the sequence is ETDIEKLWVE…LNDIMKSFSD (314 aa). Residue Asn397 is glycosylated (N-linked (GlcNAc...) asparagine). The helical transmembrane segment at 420 to 440 threads the bilayer; the sequence is VSVIRVAGGYLLMLAYACVTM. An SSD domain is found at 421–579; the sequence is SVIRVAGGYL…LLIFPAILSL (159 aa). At 441–449 the chain is on the cytoplasmic side; sequence LRWDCAKSQ. A helical membrane pass occupies residues 450–470; it reads GAVGLAGVLLVALSVAAGLGL. Topologically, residues 471–484 are extracellular; sequence CSLLGLSFNAATTQ. Residues 485–505 form a helical membrane-spanning segment; the sequence is VLPSLALGIGVDDMFLLGHSF. The Cytoplasmic portion of the chain corresponds to 506–528; that stretch reads TETRSNIPFKERTGDCLRRTGTS. The helical transmembrane segment at 529 to 549 threads the bilayer; that stretch reads VALTSVNNMIAFFMAALVPIP. Residues 550–558 are Extracellular-facing; it reads ALRAFSLQA. Residues 559 to 579 traverse the membrane as a helical segment; it reads AVVVVFNFAMALLIFPAILSL. The Cytoplasmic portion of the chain corresponds to 580 to 739; sequence DLHRREDKRL…APLLLKPETK (160 aa). Residues 740-760 traverse the membrane as a helical segment; it reads TVVVVVFVALLSLSLYGTTMV. Residues 761–1016 lie on the Extracellular side of the membrane; sequence HDGLYLTDIV…WEQYIGLRHW (256 aa). N-linked (GlcNAc...) asparagine glycans are attached at residues Asn865 and Asn888. The chain crosses the membrane as a helical span at residues 1017–1037; that stretch reads FLLSISVVLACTFLVCAILLL. Residues 1038–1044 are Cytoplasmic-facing; sequence NPWTAGV. The chain crosses the membrane as a helical span at residues 1045-1065; it reads IVFILPMMTVELFGIMGLIGI. The Extracellular portion of the chain corresponds to 1066–1072; the sequence is KLSAIPV. Residues 1073–1093 traverse the membrane as a helical segment; the sequence is VILIASVGIGVEFTVHIALGF. Topologically, residues 1094–1110 are cytoplasmic; it reads LTAIGDRNTRSAVAMEH. A helical transmembrane segment spans residues 1111–1131; the sequence is MFAPVIDGAISTLLGVLMLAG. Topologically, residues 1132–1143 are extracellular; that stretch reads SEFDFIMRYFFA. The helical transmembrane segment at 1144-1164 threads the bilayer; sequence VLAILTLLGILNGLVLLPVLL. Over 1165 to 1220 the chain is Cytoplasmic; that stretch reads SLMGPPAEVVPANNANHLQSPSPEPMPPPMNHHGYYAGHIPKASHQAFSETSDSEY.

It belongs to the patched family. Glycosylation is necessary for SHH binding. Detected in embryonic presomitic mesoderm, neuroectoderm, tissue surrounding the notochord, ventral neural tube.

It is found in the membrane. Acts as a receptor for sonic hedgehog (SHH), indian hedgehog (IHH) and desert hedgehog (DHH). Associates with the smoothened protein (SMO) to transduce the hedgehog's proteins signal. In Danio rerio (Zebrafish), this protein is Protein patched homolog 1 (ptch1).